A 335-amino-acid chain; its full sequence is Mevalonate kinase (335 aa).

ATP is bound at residue 111 to 121; that stretch reads PVGAGLGSSAA. Residue aspartate 162 is the Proton acceptor of the active site.

It belongs to the GHMP kinase family. Mevalonate kinase subfamily. As to quaternary structure, homodimer. Requires Mg(2+) as cofactor.

The protein localises to the cytoplasm. The catalysed reaction is (R)-mevalonate + ATP = (R)-5-phosphomevalonate + ADP + H(+). Its pathway is isoprenoid biosynthesis; isopentenyl diphosphate biosynthesis via mevalonate pathway; isopentenyl diphosphate from (R)-mevalonate: step 1/3. Functionally, catalyzes the phosphorylation of (R)-mevalonate (MVA) to (R)-mevalonate 5-phosphate (MVAP). Functions in the mevalonate (MVA) pathway leading to isopentenyl diphosphate (IPP), a key precursor for the biosynthesis of isoprenoid compounds such as archaeal membrane lipids. This chain is Mevalonate kinase, found in Pyrococcus abyssi (strain GE5 / Orsay).